Reading from the N-terminus, the 205-residue chain is Outer-membrane lipoprotein LolB (205 aa).

The N-terminal stretch at 1–17 is a signal peptide; that stretch reads MFLRHVIVFSLIALLTG. Cysteine 18 carries the N-palmitoyl cysteine lipid modification. Cysteine 18 carries the S-diacylglycerol cysteine lipid modification.

The protein belongs to the LolB family. In terms of assembly, monomer.

The protein localises to the cell outer membrane. Plays a critical role in the incorporation of lipoproteins in the outer membrane after they are released by the LolA protein. The chain is Outer-membrane lipoprotein LolB from Pseudomonas syringae pv. syringae (strain B728a).